The sequence spans 281 residues: Putative pyruvate, phosphate dikinase regulatory protein (281 aa).

153–160 (GISRTSKT) is a binding site for ADP.

The protein belongs to the pyruvate, phosphate/water dikinase regulatory protein family. PDRP subfamily.

The catalysed reaction is N(tele)-phospho-L-histidyl/L-threonyl-[pyruvate, phosphate dikinase] + ADP = N(tele)-phospho-L-histidyl/O-phospho-L-threonyl-[pyruvate, phosphate dikinase] + AMP + H(+). The enzyme catalyses N(tele)-phospho-L-histidyl/O-phospho-L-threonyl-[pyruvate, phosphate dikinase] + phosphate + H(+) = N(tele)-phospho-L-histidyl/L-threonyl-[pyruvate, phosphate dikinase] + diphosphate. Functionally, bifunctional serine/threonine kinase and phosphorylase involved in the regulation of the pyruvate, phosphate dikinase (PPDK) by catalyzing its phosphorylation/dephosphorylation. In Bdellovibrio bacteriovorus (strain ATCC 15356 / DSM 50701 / NCIMB 9529 / HD100), this protein is Putative pyruvate, phosphate dikinase regulatory protein.